The chain runs to 347 residues: Dihydroorotase (347 aa).

Zn(2+)-binding residues include His13 and His15. Residues 15–17 (HLR) and Asn41 contribute to the substrate site. Residues Lys99, His136, and His174 each coordinate Zn(2+). Lys99 bears the N6-carboxylysine mark. His136 contributes to the substrate binding site. Leu219 lines the substrate pocket. Asp247 is a Zn(2+) binding site. Asp247 is an active-site residue. Positions 251 and 263 each coordinate substrate.

It belongs to the metallo-dependent hydrolases superfamily. DHOase family. Class II DHOase subfamily. Homodimer. Requires Zn(2+) as cofactor.

The catalysed reaction is (S)-dihydroorotate + H2O = N-carbamoyl-L-aspartate + H(+). Its pathway is pyrimidine metabolism; UMP biosynthesis via de novo pathway; (S)-dihydroorotate from bicarbonate: step 3/3. In terms of biological role, catalyzes the reversible cyclization of carbamoyl aspartate to dihydroorotate. This chain is Dihydroorotase, found in Sinorhizobium medicae (strain WSM419) (Ensifer medicae).